Consider the following 536-residue polypeptide: C-22 sterol desaturase ERG5A (536 aa).

The chain crosses the membrane as a helical span at residues 41–61 (VWTWVFTLVALCIAYDQIAYI). C481 is a heme binding site.

Belongs to the cytochrome P450 family. It depends on heme as a cofactor.

It is found in the endoplasmic reticulum membrane. The catalysed reaction is 5-dehydroepisterol + NADPH + O2 + H(+) = ergosta-5,7,22,24(28)-tetraen-3beta-ol + NADP(+) + 2 H2O. It functions in the pathway steroid metabolism; ergosterol biosynthesis. Functionally, C-22 sterol desaturase; part of the third module of ergosterol biosynthesis pathway that includes the late steps of the pathway. ERG5A and ERG5B convert 5-dehydroepisterol into ergosta-5,7,22,24(28)-tetraen-3beta-ol by forming the C-22(23) double bond in the sterol side chain. The third module or late pathway involves the ergosterol synthesis itself through consecutive reactions that mainly occur in the endoplasmic reticulum (ER) membrane. Firstly, the squalene synthase ERG9 catalyzes the condensation of 2 farnesyl pyrophosphate moieties to form squalene, which is the precursor of all steroids. Squalene synthase is crucial for balancing the incorporation of farnesyl diphosphate (FPP) into sterol and nonsterol isoprene synthesis. Secondly, squalene is converted into lanosterol by the consecutive action of the squalene epoxidase ERG1 and the lanosterol synthase ERG7. Then, the delta(24)-sterol C-methyltransferase ERG6 methylates lanosterol at C-24 to produce eburicol. Eburicol is the substrate of the sterol 14-alpha demethylase encoded by CYP51A, CYP51B and CYP51C, to yield 4,4,24-trimethyl ergosta-8,14,24(28)-trienol. CYP51B encodes the enzyme primarily responsible for sterol 14-alpha-demethylation, and plays an essential role in ascospore formation. CYP51A encodes an additional sterol 14-alpha-demethylase, induced on ergosterol depletion and responsible for the intrinsic variation in azole sensitivity. The third CYP51 isoform, CYP51C, does not encode a sterol 14-alpha-demethylase, but is required for full virulence on host wheat ears. The C-14 reductase ERG24 then reduces the C14=C15 double bond which leads to 4,4-dimethylfecosterol. A sequence of further demethylations at C-4, involving the C-4 demethylation complex containing the C-4 methylsterol oxidases ERG25, the sterol-4-alpha-carboxylate 3-dehydrogenase ERG26 and the 3-keto-steroid reductase ERG27, leads to the production of fecosterol via 4-methylfecosterol. ERG28 has a role as a scaffold to help anchor ERG25, ERG26 and ERG27 to the endoplasmic reticulum. The C-8 sterol isomerase ERG2 then catalyzes the reaction which results in unsaturation at C-7 in the B ring of sterols and thus converts fecosterol to episterol. The sterol-C5-desaturases ERG3A and ERG3BB then catalyze the introduction of a C-5 double bond in the B ring to produce 5-dehydroepisterol. The C-22 sterol desaturases ERG5A and ERG5B further convert 5-dehydroepisterol into ergosta-5,7,22,24(28)-tetraen-3beta-ol by forming the C-22(23) double bond in the sterol side chain. Finally, ergosta-5,7,22,24(28)-tetraen-3beta-ol is substrate of the C-24(28) sterol reductase ERG4 to produce ergosterol. This chain is C-22 sterol desaturase ERG5A, found in Gibberella zeae (strain ATCC MYA-4620 / CBS 123657 / FGSC 9075 / NRRL 31084 / PH-1) (Wheat head blight fungus).